A 260-amino-acid chain; its full sequence is Proteasome subunit alpha 1 (260 aa).

Residues 237–260 (AEADLLDTGEDADDEAEDEDATEE) are disordered. Residues 240–260 (DLLDTGEDADDEAEDEDATEE) show a composition bias toward acidic residues.

Belongs to the peptidase T1A family. As to quaternary structure, the 20S proteasome core is composed of 14 alpha and 14 beta subunits that assemble into four stacked heptameric rings, resulting in a barrel-shaped structure. The two inner rings, each composed of seven catalytic beta subunits, are sandwiched by two outer rings, each composed of seven alpha subunits. The catalytic chamber with the active sites is on the inside of the barrel. Has a gated structure, the ends of the cylinder being occluded by the N-termini of the alpha-subunits. Is capped at one or both ends by the proteasome regulatory ATPase, PAN.

It localises to the cytoplasm. Its activity is regulated as follows. The formation of the proteasomal ATPase PAN-20S proteasome complex, via the docking of the C-termini of PAN into the intersubunit pockets in the alpha-rings, triggers opening of the gate for substrate entry. Interconversion between the open-gate and close-gate conformations leads to a dynamic regulation of the 20S proteasome proteolysis activity. Component of the proteasome core, a large protease complex with broad specificity involved in protein degradation. The protein is Proteasome subunit alpha 1 of Haloarcula marismortui (strain ATCC 43049 / DSM 3752 / JCM 8966 / VKM B-1809) (Halobacterium marismortui).